Here is a 1341-residue protein sequence, read N- to C-terminus: DNA-directed RNA polymerase subunit beta (1341 aa).

Belongs to the RNA polymerase beta chain family. As to quaternary structure, the RNAP catalytic core consists of 2 alpha, 1 beta, 1 beta' and 1 omega subunit. When a sigma factor is associated with the core the holoenzyme is formed, which can initiate transcription.

It catalyses the reaction RNA(n) + a ribonucleoside 5'-triphosphate = RNA(n+1) + diphosphate. In terms of biological role, DNA-dependent RNA polymerase catalyzes the transcription of DNA into RNA using the four ribonucleoside triphosphates as substrates. This Blochmanniella pennsylvanica (strain BPEN) protein is DNA-directed RNA polymerase subunit beta.